Here is a 357-residue protein sequence, read N- to C-terminus: Trans-enoyl reductase buaC (357 aa).

50-53 contributes to the NADP(+) binding site; it reads VDTK. Residue 135–142 coordinates substrate; sequence TALVSACM. NADP(+) contacts are provided by residues 170-173, 193-196, Tyr211, and 258-259; these read STAT, SPKN, and LN. Residue 278–282 coordinates substrate; it reads ATLIT. 347 to 348 provides a ligand contact to NADP(+); it reads IS.

This sequence belongs to the zinc-containing alcohol dehydrogenase family. Monomer.

It participates in mycotoxin biosynthesis. Functionally, trans-enoyl reductase; part of the gene cluster that mediates the biosynthesis of burnettramic acids, an unusual class of bolaamphiphilic pyrrolizidinediones that display potent antibacterial, antifungal, and cytotoxic activities. The first step of the biosynthesis of burnettramic acids is the hydroxylation of proline by the proline hydroxylase buaE to generate 4-hydroxyproline. The PKS-NRPS buaA and trans-enoyl reductase buaC construct the highly reduced polyketide chain, and the condensation (C) domain of buaA then catalyzes the amide bond formation with the activated 4-hydroxyproline. This is followed by the R domain releasing the nascent polyketide-peptide directly via a Dieckmann condensation to afford a tetramic acid fused to the hydroxyproline, generating the bicyclic pyrrolidinedione moiety. The cytochrome P450 monooxygenases buaD and buaG are likely responsible for the multiple hydroxylations on the polyketide chain and its terminus, although in the heterologous context, buaD does not appear to be required. Therefore, while buaG may be a multifunctional cytochrome P450 monooxygenase, it cannot be ruled out that the two secondary alcohols on the polyketide chain could have an acetate origin. Finally, the glycosyltransferase buaB transfers beta-D-mannose to the aglycone burnettramic acid A to form burnettramic acid A. Burnettramic acid B is a minor cis-pyrrolizidine epimer of burnettramic acid A and it is likely that small amounts of it form naturally in acidic environments. The chain is Trans-enoyl reductase buaC from Petromyces alliaceus (Aspergillus alliaceus).